Consider the following 521-residue polypeptide: MELNFKSIIFLVFVSLTLYWVYRILDWVWFKPKKLEKCLREQGFKGNPYRLFLGDQYDSGKLIRQALTKPIGVEEDVKKRIVPHILKTVGTHGKKSFMWVGRIPRVNITDPELIKEVLTKYYKFQKNHHDLDPITKLLLTGIGSLEGDPWAKRRKIINAAFHFEKLKLMLPAFYLSCRDMVTKWDNKVPEGGSAEVDVWHDIETLTGDVISRTLFGSNFEEGRRIFELMKELTALTIDVIRSVYIPGQRFLPTKRNNRMRAIDKEVRVRITEIINKKMKVMKSGEAASAADDFLGILLECNLNEIKEQGNNKSAGMTIGEIIGECKLFYFAGQDTTSTLLVWTMVLLSRFPEWQTRAREEVFQVFGNKTPDYDGISHLKVITMILYEVLRLYTPVAELTKVAHEATQLGKYFIPAGVQLMMPQILLHHDPEIWGEDVMEFKPERFAEGVLKATKSQGSFFPFSLGPRMCIGQNFALLEAKMAMSLILRRFSFELSPSYVHAPFTLITMQPQYGAHLILHKL.

Residues 8-28 (IIFLVFVSLTLYWVYRILDWV) traverse the membrane as a helical segment. Asn-107 and Asn-311 each carry an N-linked (GlcNAc...) asparagine glycan. Position 469 (Cys-469) interacts with heme.

This sequence belongs to the cytochrome P450 family. As to expression, mostly present in actively growing aerial organs, including leaves, flower buds and stems, and, to a lower extent, in mature leaves, roots and opened flowers. Expressed in the leaf internal phloem-associated parenchyma (IPAP) inside the mesophyll.

The protein localises to the endoplasmic reticulum membrane. It catalyses the reaction 7-deoxyloganate + reduced [NADPH--hemoprotein reductase] + O2 = loganate + oxidized [NADPH--hemoprotein reductase] + H2O + H(+). It functions in the pathway alkaloid biosynthesis. Its function is as follows. Component of the seco-iridoid and derivatives monoterpenoid indole alkaloids (MIAs, e.g. vincristine, quinine, and strychnine) biosynthesis pathway. Catalyzes the conversion of 7-deoxyloganic acid into loganic acid. Not active on 7-deoxyloganetic acid. In Catharanthus roseus (Madagascar periwinkle), this protein is 7-deoxyloganic acid hydroxylase.